The primary structure comprises 738 residues: Interleukin-17 receptor D (738 aa).

A signal peptide spans 1-16 (MAPWLQLCSFFFTVNA). At 17–299 (CLNGSQLAVA…VQSPWAGPIR (283 aa)) the chain is on the extracellular side. Asn-19, Asn-55, Asn-62, Asn-80, Asn-137, Asn-171, Asn-206, and Asn-277 each carry an N-linked (GlcNAc...) asparagine glycan. The chain crosses the membrane as a helical span at residues 300–320 (AVAITVPLVVISAFATLFTVM). The Cytoplasmic segment spans residues 321–738 (CRKKQQENIY…TDELQALAPL (418 aa)). The SEFIR domain occupies 355–509 (QPKVFLCYSN…LMDHLPELCA (155 aa)). Positions 653–738 (GSPSEMPRDS…TDELQALAPL (86 aa)) are disordered. Positions 667-702 (SSVPSSELSLPLMEGLSPDQIETSSLTESVSSSSGL) are enriched in low complexity. Basic and acidic residues predominate over residues 720-731 (SREHGCHSHTDE).

Self-associates. Interacts with FGFR2 and phosphorylated MAP2K1 or MAP2K2. Associates with a MAP2K1/2-MAPK1/3 complex. Interacts with FGFR1 and MAP3K7.

The protein resides in the golgi apparatus membrane. It localises to the cell membrane. Functionally, feedback inhibitor of fibroblast growth factor mediated Ras-MAPK signaling and ERK activation. Regulates the nuclear ERK signaling pathway by spatially blocking nuclear translocation of activated ERK. Mediates JNK activation and may be involved in apoptosis. May inhibit FGF-induced FGFR1 tyrosine phosphorylation. Might have a role in the early stages of fate specification of GnRH-secreting neurons. Inhibits TGFB-induced epithelial-to-mesenchymal transition in lens epithelial cells. The polypeptide is Interleukin-17 receptor D (Il17rd) (Mus musculus (Mouse)).